The sequence spans 92 residues: Large ribosomal subunit protein bL28 (92 aa).

This sequence belongs to the bacterial ribosomal protein bL28 family.

The protein is Large ribosomal subunit protein bL28 of Borrelia hermsii (strain HS1 / DAH).